The following is a 1181-amino-acid chain: Putative type II restriction enzyme and methyltransferase RM.MjaORFECS2P (1181 aa).

In the C-terminal section; belongs to the N(4)/N(6)-methyltransferase family.

It carries out the reaction Endonucleolytic cleavage of DNA to give specific double-stranded fragments with terminal 5'-phosphates.. It catalyses the reaction a 2'-deoxyadenosine in DNA + S-adenosyl-L-methionine = an N(6)-methyl-2'-deoxyadenosine in DNA + S-adenosyl-L-homocysteine + H(+). Its function is as follows. Probably a G subtype restriction enzyme that recognizes an undetermined sequence and cleaves at an undetermined site. Probably also acts as an alpha subtype methylase, presumably on the same sequence. This chain is Putative type II restriction enzyme and methyltransferase RM.MjaORFECS2P, found in Methanocaldococcus jannaschii (strain ATCC 43067 / DSM 2661 / JAL-1 / JCM 10045 / NBRC 100440) (Methanococcus jannaschii).